Here is a 339-residue protein sequence, read N- to C-terminus: Methionine import ATP-binding protein MetN 2 (339 aa).

The region spanning 2–241 (ISFNNVSKLY…PKTKTTQNFV (240 aa)) is the ABC transporter domain. ATP is bound at residue 38–45 (GFSGAGKS).

This sequence belongs to the ABC transporter superfamily. Methionine importer (TC 3.A.1.24) family. The complex is composed of two ATP-binding proteins (MetN), two transmembrane proteins (MetI) and a solute-binding protein (MetQ).

It is found in the cell membrane. It carries out the reaction L-methionine(out) + ATP + H2O = L-methionine(in) + ADP + phosphate + H(+). The catalysed reaction is D-methionine(out) + ATP + H2O = D-methionine(in) + ADP + phosphate + H(+). Part of the ABC transporter complex MetNIQ involved in methionine import. Responsible for energy coupling to the transport system. The polypeptide is Methionine import ATP-binding protein MetN 2 (Bacillus cereus (strain ATCC 14579 / DSM 31 / CCUG 7414 / JCM 2152 / NBRC 15305 / NCIMB 9373 / NCTC 2599 / NRRL B-3711)).